A 223-amino-acid chain; its full sequence is RNA-free ribonuclease P (223 aa).

Belongs to the HARP family.

It carries out the reaction Endonucleolytic cleavage of RNA, removing 5'-extranucleotides from tRNA precursor.. In terms of biological role, RNA-free RNase P that catalyzes the removal of the 5'-leader sequence from pre-tRNA to produce the mature 5'-terminus. The protein is RNA-free ribonuclease P of Methanococcus maripaludis (strain C6 / ATCC BAA-1332).